Reading from the N-terminus, the 178-residue chain is Ribulose bisphosphate carboxylase small subunit, chloroplastic (178 aa).

The transit peptide at 1-55 (MASSMMVSTAAVSRTSPAQSNMVVPFAGLHSSAAFPVTRKFADSSKLPSNGLRVR) directs the protein to the chloroplast.

This sequence belongs to the RuBisCO small chain family. As to quaternary structure, heterohexadecamer of 8 large and 8 small subunits.

It is found in the plastid. The protein localises to the chloroplast. Functionally, ruBisCO catalyzes two reactions: the carboxylation of D-ribulose 1,5-bisphosphate, the primary event in carbon dioxide fixation, as well as the oxidative fragmentation of the pentose substrate. Both reactions occur simultaneously and in competition at the same active site. Although the small subunit is not catalytic it is essential for maximal activity. The protein is Ribulose bisphosphate carboxylase small subunit, chloroplastic of Zantedeschia aethiopica (White calla lily).